Reading from the N-terminus, the 103-residue chain is Large ribosomal subunit protein bL21 (103 aa).

The protein belongs to the bacterial ribosomal protein bL21 family. As to quaternary structure, part of the 50S ribosomal subunit. Contacts protein L20.

In terms of biological role, this protein binds to 23S rRNA in the presence of protein L20. The polypeptide is Large ribosomal subunit protein bL21 (Enterobacter sp. (strain 638)).